The following is a 333-amino-acid chain: Fe(3+)-citrate import system permease protein YfmE (333 aa).

8 helical membrane passes run 12–32 (LLAILILAVILIVLSVISIGI), 65–85 (IILAILAGAGLAAAGAILQGV), 95–115 (VVGISKGSGLAAMAVILIFPE), 120–140 (VLPFSAFAGAAIIAVLLLMIA), 194–214 (EVKLLAPWLLILFPIVCILIP), 238–258 (FILIFTAVALAGSCVAVVGSI), 279–299 (YLLPASALIGAIILLIADTLG), and 306–326 (VEIPAGILTAVIGAPYFLYLL).

This sequence belongs to the binding-protein-dependent transport system permease family. FecCD subfamily. The complex is composed of one ATP-binding protein (YfmF), two transmembrane proteins (YfmD and YfmE) and a solute-binding protein (YfmC).

It localises to the cell membrane. Its function is as follows. Part of the ABC transporter complex YfmCDEF involved in citrate-dependent Fe(3+) import. Involved in the translocation of the substrate across the membrane. This Bacillus subtilis (strain 168) protein is Fe(3+)-citrate import system permease protein YfmE (yfmE).